Reading from the N-terminus, the 437-residue chain is Adenylosuccinate synthetase (437 aa).

Residues 12–18 and 40–42 contribute to the GTP site; these read GDEGKGK and GHT. The active-site Proton acceptor is aspartate 13. Positions 13 and 40 each coordinate Mg(2+). IMP is bound by residues 13–16, 38–41, threonine 128, arginine 142, glutamine 223, threonine 238, and arginine 302; these read DEGK and NAGH. Histidine 41 serves as the catalytic Proton donor. Residue 298–304 coordinates substrate; that stretch reads TTTGRRR. Residues arginine 304, 330-332, and 412-414 contribute to the GTP site; these read KLD and SLG.

This sequence belongs to the adenylosuccinate synthetase family. In terms of assembly, homodimer. Mg(2+) serves as cofactor.

Its subcellular location is the cytoplasm. It carries out the reaction IMP + L-aspartate + GTP = N(6)-(1,2-dicarboxyethyl)-AMP + GDP + phosphate + 2 H(+). It participates in purine metabolism; AMP biosynthesis via de novo pathway; AMP from IMP: step 1/2. Its function is as follows. Plays an important role in the de novo pathway of purine nucleotide biosynthesis. Catalyzes the first committed step in the biosynthesis of AMP from IMP. This chain is Adenylosuccinate synthetase, found in Synechococcus sp. (strain CC9311).